The sequence spans 195 residues: Ribonuclease HII (195 aa).

The 190-residue stretch at 6–195 (SLIAGVDEVG…KSFISRLEIN (190 aa)) folds into the RNase H type-2 domain. The a divalent metal cation site is built by D12, E13, and D108.

This sequence belongs to the RNase HII family. Mn(2+) serves as cofactor. It depends on Mg(2+) as a cofactor.

It localises to the cytoplasm. It carries out the reaction Endonucleolytic cleavage to 5'-phosphomonoester.. Functionally, endonuclease that specifically degrades the RNA of RNA-DNA hybrids. The sequence is that of Ribonuclease HII from Prochlorococcus marinus (strain NATL1A).